The following is a 96-amino-acid chain: Fruit-specific protein (96 aa).

3 disulfide bridges follow: Cys-59–Cys-75, Cys-63–Cys-78, and Cys-69–Cys-92.

Fruit specific.

This Solanum lycopersicum (Tomato) protein is Fruit-specific protein (2A11).